A 353-amino-acid polypeptide reads, in one-letter code: Holliday junction branch migration complex subunit RuvB (353 aa).

A large ATPase domain (RuvB-L) region spans residues 4–186 (ADRLIAATHS…FGIVQRLEFY (183 aa)). Residues isoleucine 25, arginine 26, glycine 67, lysine 70, threonine 71, threonine 72, 133-135 (EDF), arginine 176, tyrosine 186, and arginine 223 contribute to the ATP site. A Mg(2+)-binding site is contributed by threonine 71. The tract at residues 187–257 (STADLATIVS…VADLALNLLD (71 aa)) is small ATPAse domain (RuvB-S). The segment at 260–353 (EHGFDHQDRR…VDEFLDAVDD (94 aa)) is head domain (RuvB-H). Residues arginine 296, arginine 315, and arginine 320 each contribute to the DNA site.

The protein belongs to the RuvB family. Homohexamer. Forms an RuvA(8)-RuvB(12)-Holliday junction (HJ) complex. HJ DNA is sandwiched between 2 RuvA tetramers; dsDNA enters through RuvA and exits via RuvB. An RuvB hexamer assembles on each DNA strand where it exits the tetramer. Each RuvB hexamer is contacted by two RuvA subunits (via domain III) on 2 adjacent RuvB subunits; this complex drives branch migration. In the full resolvosome a probable DNA-RuvA(4)-RuvB(12)-RuvC(2) complex forms which resolves the HJ.

Its subcellular location is the cytoplasm. The catalysed reaction is ATP + H2O = ADP + phosphate + H(+). The RuvA-RuvB-RuvC complex processes Holliday junction (HJ) DNA during genetic recombination and DNA repair, while the RuvA-RuvB complex plays an important role in the rescue of blocked DNA replication forks via replication fork reversal (RFR). RuvA specifically binds to HJ cruciform DNA, conferring on it an open structure. The RuvB hexamer acts as an ATP-dependent pump, pulling dsDNA into and through the RuvAB complex. RuvB forms 2 homohexamers on either side of HJ DNA bound by 1 or 2 RuvA tetramers; 4 subunits per hexamer contact DNA at a time. Coordinated motions by a converter formed by DNA-disengaged RuvB subunits stimulates ATP hydrolysis and nucleotide exchange. Immobilization of the converter enables RuvB to convert the ATP-contained energy into a lever motion, pulling 2 nucleotides of DNA out of the RuvA tetramer per ATP hydrolyzed, thus driving DNA branch migration. The RuvB motors rotate together with the DNA substrate, which together with the progressing nucleotide cycle form the mechanistic basis for DNA recombination by continuous HJ branch migration. Branch migration allows RuvC to scan DNA until it finds its consensus sequence, where it cleaves and resolves cruciform DNA. In Pseudomonas fluorescens (strain Pf0-1), this protein is Holliday junction branch migration complex subunit RuvB.